Here is a 315-residue protein sequence, read N- to C-terminus: Cobalamin biosynthesis protein CobD (315 aa).

Helical transmembrane passes span 54–74, 78–98, 152–172, 203–223, and 295–315; these read GLLF…ILFL, IAYW…LAMT, ADGV…LALM, IANF…SFIL, and LLYM…LLLF.

It belongs to the CobD/CbiB family.

Its subcellular location is the cell membrane. The protein operates within cofactor biosynthesis; adenosylcobalamin biosynthesis. Functionally, converts cobyric acid to cobinamide by the addition of aminopropanol on the F carboxylic group. The polypeptide is Cobalamin biosynthesis protein CobD (Listeria monocytogenes serovar 1/2a (strain ATCC BAA-679 / EGD-e)).